Consider the following 107-residue polypeptide: uncharacterized protein (107 aa).

Residues 86-107 form a disordered region; that stretch reads KRAETARLPAATPQKRTGPARG.

This is an uncharacterized protein from Saccharomyces cerevisiae (strain ATCC 204508 / S288c) (Baker's yeast).